Reading from the N-terminus, the 1289-residue chain is MGGCFCIPGERSLPWGPGKEGSSKDPPGLAEDTSSLENKRKCFLPQNMTQDLVLSFCVKSRSRRCVNAALQEAARRRLWALENEAQEVHALFKDLSARLVSVQSQKDQFLITFKTLEEIWKFSTYLNLGYVSICLEHLFFDHTYWLNSRLVDDTEIQVSVDDNHLENIYLGLLLQEGHFFCRAVCSVAQPADKEGEYLTLCKNELISVLSGGESECEAMSLVTGQRGLVPMSALEPLPVPFHQWFLKNHPGICGLPRKRDWTGSGQIGRGRCKALMDYEQEERDELCFLQGESIDVIGFVIPGLQWFIGKSVSSGEVGFVPTRSIDLDSCSPMSKNSAFFSDEERSSLWSPGSERKAECSGFLCSLAHTDITSIYRLSEFEAIQNLQNDLSASQPEGFREARSGGTWMERQTIGSRRSSGSGDSSPEEDELISASSDSYHLPEPEDLDDPELFMDLSTSLEEDDVEHFAPILAFLDHEGYTDHFKSLYDFSFSFLTSSFYSFSEEDELVAYLETSRKWAKMSHMTWAHARLCFLLGRLSIRKTKLSQARVYFEEAIRVLDGAFEDLSLVAALYINLAAIYLRQRLRHKGPTLLEKAGALLACLPDHEFSTKNELDVVTYVLRQGIVVGSGLLEARSCFLAIRLLLSLGRHEEVVPFAERLQLLSGHPPASEATATMLSSLYDKKYLPHLAVASVQKRGPQSARGMSLSIWQAYLVLQNATKILGVPSSNWCEVSALACPTLRQALAACEELSDQDIQRTLCLILSKMYLQHQSPDGSVHYLSQAHVLGKLLGEEEAFESSLCLAWAYLLGRQTEKALEILEPLLCSLRETECVTQRGVVHNLLGLAFEDEGRTSRAAKSYLRALIRAREMGNIRNQAVSMANLGHLTLKSCMQQSARGYLLQAVRLYSELQASKETDMELVQVLLWLGQASVSGHQLVHSRLCYEMALLFGLRHQHLSSQLQVTKSLCHFYSSVSPNPDACITYHEHWLALAQQLRDREMEGQLLESLGQLYRNLNTSRSLRRSLACIKESLRIFVDLGERDKAAEAWLGAGRLHYLMQEDELVELYLQEAIQTALRSEEPSLALKLYEEAGDVFFNGTRHRHRAVEYYRAGAVPLARRMKALRTELRIFNKLTELQISLEGYEKALEFATLAARLSVLTGDQKQELVAFHRLATVYFSLNMYEMAEDCYLKTLSLCPPWLQSPKEALYYAKVYCRLGRLTFYQLKDAHDATEYFLLALAAAVLMGDEELQNTIKNRLDSICQSPLWHSNPFGCSSERARWLSGGSLAL.

SH3 domains lie at 176–239 (EGHF…PLPV) and 267–330 (IGRG…LDSC). The disordered stretch occupies residues 393-442 (SQPEGFREARSGGTWMERQTIGSRRSSGSGDSSPEEDELISASSDSYHLP). Over residues 414 to 424 (GSRRSSGSGDS) the composition is skewed to low complexity. TPR repeat units follow at residues 529–562 (ARLC…LDGA), 758–791 (RTLC…GKLL), 837–870 (GVVH…AREM), 1002–1038 (GQLL…FVDL), 1085–1119 (LKLY…LARR), 1120–1153 (MKAL…ATLA), 1167–1200 (LVAF…CPPW), and 1211–1245 (AKVY…AVLM).

This chain is SH3 domain and tetratricopeptide repeat-containing protein 2 (Sh3tc2), found in Mus musculus (Mouse).